Reading from the N-terminus, the 612-residue chain is uncharacterized protein (612 aa).

It is found in the plastid. It localises to the chloroplast. This is an uncharacterized protein from Pyropia yezoensis (Susabi-nori).